A 495-amino-acid chain; its full sequence is Neuronal acetylcholine receptor subunit alpha-3 (495 aa).

Positions 1–21 are cleaved as a signal peptide; that stretch reads MARRSRLRRLLLLLLLPVAST. The Extracellular portion of the chain corresponds to 22–240; it reads SDAEHRLFER…PLFYTINLII (219 aa). 2 N-linked (GlcNAc...) asparagine glycosylation sites follow: Asn45 and Asn162. Disulfide bonds link Cys149–Cys163 and Cys213–Cys214. The helical transmembrane segment at 241–256 threads the bilayer; the sequence is PCLLISFLTVLVFYLP. Residues 257-258 are Cytoplasmic-facing; sequence SD. Residues 259 to 275 form a helical membrane-spanning segment; that stretch reads CGEKVTLCISVLLSLTV. Residue Glu261 coordinates Na(+). Over 276 to 297 the chain is Extracellular; the sequence is FLLVITETIPSTSLVIPLIGEY. A helical transmembrane segment spans residues 298–316; sequence LLFTMIFVTLSIVITVFVL. Residues 317–464 are Cytoplasmic-facing; that stretch reads NVHYRTPTTH…QDDWKYVAMV (148 aa). Ser403 and Ser406 each carry phosphoserine. The chain crosses the membrane as a helical span at residues 465–483; it reads IDRIFLWVFILVCILGTAG. Over 484–495 the chain is Extracellular; sequence LFLQPLMTRDDA.

The protein belongs to the ligand-gated ion channel (TC 1.A.9) family. Acetylcholine receptor (TC 1.A.9.1) subfamily. Alpha-3/CHRNA3 sub-subfamily. Neuronal AChR is composed of two different types of subunits: alpha and beta. CHRNA3/Alpha-3 subunit can be combined to CHRNB2/beta-2 or CHRNB4/beta-4 to give rise to functional receptors. Part of a complex composed of STUB1/CHIP, VCP/p97, CHRNA3, and UBXN2A that modulates the ubiquitination and endoplasmic reticulum-associated degradation (ERAD) of CHRNA3. Within the complex UBXN2A acts as a scaffold protein required for the interaction of CHRNA3 with VCP/p97, this interaction also inhibits CHRNA3 ubiquitination by STUB1/CHIP and subsequently ERAD. Interacts with UBXN2A (via SEP domain), the interaction is required for the interaction of CHRNA3 in the STUB1:VCP:UBXN2A complex. Interacts with RIC3; which is required for proper folding and assembly. Interacts with LYPD6. Post-translationally, ubiquitinated; by STUB1/CHIP and thereafter degraded by the 26S proteosome complex.

The protein resides in the synaptic cell membrane. Its subcellular location is the cell membrane. It is found in the endoplasmic reticulum. It localises to the golgi apparatus. The enzyme catalyses K(+)(in) = K(+)(out). The catalysed reaction is Na(+)(in) = Na(+)(out). It catalyses the reaction Ca(2+)(in) = Ca(2+)(out). With respect to regulation, activated by a myriad of ligands such as acetylcholine, cytisine, nicotine, choline and epibatidine. The heteropentamer CHRNA3:CHRNB2 activity is blocked by alpha-conotoxins ImI, ImII, PnIA, GID and MII. The heteropentamer CHRNA3:CHRNB4 activity is blocked by the alpha-conotoxin ImI and AuIB. Component of neuronal acetylcholine receptors (nAChRs) that function as pentameric, ligand-gated cation channels with high calcium permeability among other activities. nAChRs are excitatory neurotrasnmitter receptors formed by a collection of nAChR subunits known to mediate synaptic transmission in the nervous system and the neuromuscular junction. Each nAchR subunit confers differential attributes to channel properties, including activation, deactivation and desensitization kinetics, pH sensitivity, cation permeability, and binding to allosteric modulators. CHRNA3 forms heteropentameric neuronal acetylcholine receptors with CHRNB2 and CHRNB4. CHRNA3:CHRNB4 being predominant in neurons of the autonomic ganglia, it is known as ganglionic nicotinic receptor. CHRNA3:CHRNB4 also plays an important role in the habenulo-interpeduncular tract, modulating the mesolimbic dopamine system and affecting reward circuits and addiction. Hypothalamic CHRNA3:CHRNB4 nAChR activation by nicotine leads to activation of POMC neurons and a decrease in food intake. Also expressed in the urothelium where it modulates reflex bladder activity by increasing intracellular calcium through extracellular influx and basal ATP release. This chain is Neuronal acetylcholine receptor subunit alpha-3 (CHRNA3), found in Bos taurus (Bovine).